The primary structure comprises 253 residues: NAC transcription factor 32 (253 aa).

An NAC domain is found at 10–160; the sequence is FPPGFRFHPT…DWVLCRIYNK (151 aa). Residues 106–166 mediate DNA binding; it reads VGIKKALVFY…IYNKKGVIEK (61 aa).

In terms of tissue distribution, expressed in germinating seeds, roots, leaf veins, open flowers and silique stalks.

It is found in the nucleus. In terms of biological role, transcriptional activator that positively regulates age-dependent senescence, dark-induced leaf senescence and stress-induced senescence. Regulates leaf senescence through the modulation of the expression of senescence-associated genes SGR1/NYE1, SAG113 and SAUR36/SAG201, which are involved in chlorophyll degradation, and abscisic acid (ABA) and auxin promotion of senescence, respectively. Promotes reactive oxygen species (ROS) production during age-dependent and stress-induced senescence. Positively regulates auxin-mediated responses in roots. Stress-responsive NAC transcription factor involved in ABA-inducible leaf senescence signaling. Required for normal seed development and morphology. The chain is NAC transcription factor 32 from Arabidopsis thaliana (Mouse-ear cress).